We begin with the raw amino-acid sequence, 255 residues long: Small ribosomal subunit protein uS2 (255 aa).

Residues Gln226 to Glu255 form a disordered region.

This sequence belongs to the universal ribosomal protein uS2 family.

This chain is Small ribosomal subunit protein uS2, found in Staphylococcus aureus (strain Mu3 / ATCC 700698).